The following is a 321-amino-acid chain: Aspartate carbamoyltransferase catalytic subunit (321 aa).

2 residues coordinate carbamoyl phosphate: R60 and T61. K88 provides a ligand contact to L-aspartate. Residues R110, H138, and Q141 each contribute to the carbamoyl phosphate site. Residues R171 and R225 each contribute to the L-aspartate site. Carbamoyl phosphate-binding residues include G266 and P267.

It belongs to the aspartate/ornithine carbamoyltransferase superfamily. ATCase family. In terms of assembly, heterododecamer (2C3:3R2) of six catalytic PyrB chains organized as two trimers (C3), and six regulatory PyrI chains organized as three dimers (R2).

The catalysed reaction is carbamoyl phosphate + L-aspartate = N-carbamoyl-L-aspartate + phosphate + H(+). The protein operates within pyrimidine metabolism; UMP biosynthesis via de novo pathway; (S)-dihydroorotate from bicarbonate: step 2/3. Functionally, catalyzes the condensation of carbamoyl phosphate and aspartate to form carbamoyl aspartate and inorganic phosphate, the committed step in the de novo pyrimidine nucleotide biosynthesis pathway. This chain is Aspartate carbamoyltransferase catalytic subunit, found in Sorangium cellulosum (strain So ce56) (Polyangium cellulosum (strain So ce56)).